Consider the following 1435-residue polypeptide: Gag-Pol polyprotein (1435 aa).

Gly-2 carries N-myristoyl glycine; by host lipidation. The interval Val-7–Leu-31 is interaction with Gp41. Residues Leu-8–Arg-43 form an interaction with host CALM1 region. The tract at residues Glu-12 to Ile-19 is interaction with host AP3D1. Positions Asp-14–His-33 are interaction with membrane phosphatidylinositol 4,5-bisphosphate and RNA. The short motif at Trp-16–Arg-22 is the Nuclear export signal element. The Nuclear localization signal motif lies at Lys-26 to Lys-32. The interval Glu-73 to Ser-77 is interaction with membrane phosphatidylinositol 4,5-bisphosphate. A disordered region spans residues Glu-106–Val-128. Position 132 is a phosphotyrosine; by host (Tyr-132). The tract at residues Asn-189–Gln-227 is interaction with host PPIA/CYPA and NUP153. The tract at residues Pro-217–Pro-225 is PPIA/CYPA-binding loop. Residues Tyr-277–Leu-363 form a dimerization/Multimerization of capsid protein p24 region. 2 consecutive CCHC-type zinc fingers follow at residues Val-390 to Ala-407 and Lys-411 to Glu-428. Residues Phe-448–Gln-481 are disordered. The dimerization of protease stretch occupies residues Pro-489–Leu-493. One can recognise a Peptidase A2 domain in the interval Lys-508–Leu-577. Asp-513 serves as the catalytic For protease activity; shared with dimeric partner. 2 dimerization of protease regions span residues Gly-537 to Lys-543 and Asn-576 to Pro-588. Positions Glu-631–Leu-821 constitute a Reverse transcriptase domain. Asp-697, Asp-772, and Asp-773 together coordinate Mg(2+). An RT 'primer grip' region spans residues Phe-814–His-822. The Tryptophan repeat motif motif lies at Trp-985 to Trp-1001. Residues Ile-1021–Arg-1144 form the RNase H type-1 domain. Residues Asp-1030, Glu-1065, Asp-1085, and Asp-1136 each coordinate Mg(2+). The Integrase-type zinc-finger motif lies at Asp-1150 to Gln-1191. Residues His-1159, His-1163, Cys-1187, and Cys-1190 each contribute to the Zn(2+) site. In terms of domain architecture, Integrase catalytic spans Val-1201–Ile-1351. 3 residues coordinate Mg(2+): Asp-1211, Asp-1263, and Glu-1299. A DNA-binding region (integrase-type) is located at residues Phe-1370–Asp-1417.

Homotrimer; further assembles as hexamers of trimers. Interacts with gp41 (via C-terminus). Interacts with host CALM1; this interaction induces a conformational change in the Matrix protein, triggering exposure of the myristate group. Interacts with host AP3D1; this interaction allows the polyprotein trafficking to multivesicular bodies during virus assembly. Part of the pre-integration complex (PIC) which is composed of viral genome, matrix protein, Vpr and integrase. In terms of assembly, homodimer; the homodimer further multimerizes as homohexamers or homopentamers. Interacts with human PPIA/CYPA; this interaction stabilizes the capsid. Interacts with human NUP153. Interacts with host PDZD8; this interaction stabilizes the capsid. Interacts with monkey TRIM5; this interaction destabilizes the capsid. As to quaternary structure, homodimer, whose active site consists of two apposed aspartic acid residues. Heterodimer of p66 RT and p51 RT (RT p66/p51). Heterodimerization of RT is essential for DNA polymerase activity. The overall folding of the subdomains is similar in p66 RT and p51 RT but the spatial arrangements of the subdomains are dramatically different. In terms of assembly, homotetramer; may further associate as a homohexadecamer. Part of the pre-integration complex (PIC) which is composed of viral genome, matrix protein, Vpr and integrase. Interacts with human SMARCB1/INI1 and human PSIP1/LEDGF isoform 1. Interacts with human KPNA3; this interaction might play a role in nuclear import of the pre-. integration complex. Interacts with human NUP153; this interaction might play a role in nuclear import of the pre-integration complex. Mg(2+) is required as a cofactor. Post-translationally, specific enzymatic cleavages by the viral protease yield mature proteins. The protease is released by autocatalytic cleavage. The polyprotein is cleaved during and after budding, this process is termed maturation. Proteolytic cleavage of p66 RT removes the RNase H domain to yield the p51 RT subunit. Nucleocapsid protein p7 might be further cleaved after virus entry. In terms of processing, tyrosine phosphorylated presumably in the virion by a host kinase. Phosphorylation is apparently not a major regulator of membrane association. Phosphorylated possibly by host MAPK1; this phosphorylation is necessary for Pin1-mediated virion uncoating. Post-translationally, methylated by host PRMT6, impairing its function by reducing RNA annealing and the initiation of reverse transcription.

It localises to the host cell membrane. The protein resides in the host endosome. The protein localises to the host multivesicular body. Its subcellular location is the virion membrane. It is found in the host nucleus. It localises to the host cytoplasm. The protein resides in the virion. It carries out the reaction Specific for a P1 residue that is hydrophobic, and P1' variable, but often Pro.. The catalysed reaction is Endohydrolysis of RNA in RNA/DNA hybrids. Three different cleavage modes: 1. sequence-specific internal cleavage of RNA. Human immunodeficiency virus type 1 and Moloney murine leukemia virus enzymes prefer to cleave the RNA strand one nucleotide away from the RNA-DNA junction. 2. RNA 5'-end directed cleavage 13-19 nucleotides from the RNA end. 3. DNA 3'-end directed cleavage 15-20 nucleotides away from the primer terminus.. It catalyses the reaction 3'-end directed exonucleolytic cleavage of viral RNA-DNA hybrid.. The enzyme catalyses DNA(n) + a 2'-deoxyribonucleoside 5'-triphosphate = DNA(n+1) + diphosphate. Its activity is regulated as follows. Protease: The viral protease is inhibited by many synthetic protease inhibitors (PIs), such as amprenavir, atazanavir, indinavir, loprinavir, nelfinavir, ritonavir and saquinavir. Use of protease inhibitors in tritherapy regimens permit more ambitious therapeutic strategies. Reverse transcriptase/ribonuclease H: RT can be inhibited either by nucleoside RT inhibitors (NRTIs) or by non nucleoside RT inhibitors (NNRTIs). NRTIs act as chain terminators, whereas NNRTIs inhibit DNA polymerization by binding a small hydrophobic pocket near the RT active site and inducing an allosteric change in this region. Classical NRTIs are abacavir, adefovir (PMEA), didanosine (ddI), lamivudine (3TC), stavudine (d4T), tenofovir (PMPA), zalcitabine (ddC), and zidovudine (AZT). Classical NNRTIs are atevirdine (BHAP U-87201E), delavirdine, efavirenz (DMP-266), emivirine (I-EBU), and nevirapine (BI-RG-587). The tritherapies used as a basic effective treatment of AIDS associate two NRTIs and one NNRTI. In terms of biological role, mediates, with Gag polyprotein, the essential events in virion assembly, including binding the plasma membrane, making the protein-protein interactions necessary to create spherical particles, recruiting the viral Env proteins, and packaging the genomic RNA via direct interactions with the RNA packaging sequence (Psi). Gag-Pol polyprotein may regulate its own translation, by the binding genomic RNA in the 5'-UTR. At low concentration, the polyprotein would promote translation, whereas at high concentration, the polyprotein would encapsidate genomic RNA and then shut off translation. Targets the polyprotein to the plasma membrane via a multipartite membrane-binding signal, that includes its myristoylated N-terminus. Matrix protein is part of the pre-integration complex. Implicated in the release from host cell mediated by Vpu. Binds to RNA. Functionally, forms the conical core that encapsulates the genomic RNA-nucleocapsid complex in the virion. Most core are conical, with only 7% tubular. The core is constituted by capsid protein hexamer subunits. The core is disassembled soon after virion entry. Host restriction factors such as monkey TRIM5-alpha or TRIMCyp bind retroviral capsids and cause premature capsid disassembly, leading to blocks in reverse transcription. Capsid restriction by TRIM5 is one of the factors which restricts HIV-1 to the human species. Host PIN1 apparently facilitates the virion uncoating. On the other hand, interactions with PDZD8 or CYPA stabilize the capsid. Its function is as follows. Encapsulates and protects viral dimeric unspliced genomic RNA (gRNA). Binds these RNAs through its zinc fingers. Acts as a nucleic acid chaperone which is involved in rearangement of nucleic acid secondary structure during gRNA retrotranscription. Also facilitates template switch leading to recombination. As part of the polyprotein, participates in gRNA dimerization, packaging, tRNA incorporation and virion assembly. In terms of biological role, aspartyl protease that mediates proteolytic cleavages of Gag and Gag-Pol polyproteins during or shortly after the release of the virion from the plasma membrane. Cleavages take place as an ordered, step-wise cascade to yield mature proteins. This process is called maturation. Displays maximal activity during the budding process just prior to particle release from the cell. Also cleaves Nef and Vif, probably concomitantly with viral structural proteins on maturation of virus particles. Hydrolyzes host EIF4GI and PABP1 in order to shut off the capped cellular mRNA translation. The resulting inhibition of cellular protein synthesis serves to ensure maximal viral gene expression and to evade host immune response. Also mediates cleavage of host YTHDF3. Mediates cleavage of host CARD8, thereby activating the CARD8 inflammasome, leading to the clearance of latent HIV-1 in patient CD4(+) T-cells after viral reactivation; in contrast, HIV-1 can evade CARD8-sensing when its protease remains inactive in infected cells prior to viral budding. Multifunctional enzyme that converts the viral RNA genome into dsDNA in the cytoplasm, shortly after virus entry into the cell. This enzyme displays a DNA polymerase activity that can copy either DNA or RNA templates, and a ribonuclease H (RNase H) activity that cleaves the RNA strand of RNA-DNA heteroduplexes in a partially processive 3' to 5' endonucleasic mode. Conversion of viral genomic RNA into dsDNA requires many steps. A tRNA(3)-Lys binds to the primer-binding site (PBS) situated at the 5'-end of the viral RNA. RT uses the 3' end of the tRNA primer to perform a short round of RNA-dependent minus-strand DNA synthesis. The reading proceeds through the U5 region and ends after the repeated (R) region which is present at both ends of viral RNA. The portion of the RNA-DNA heteroduplex is digested by the RNase H, resulting in a ssDNA product attached to the tRNA primer. This ssDNA/tRNA hybridizes with the identical R region situated at the 3' end of viral RNA. This template exchange, known as minus-strand DNA strong stop transfer, can be either intra- or intermolecular. RT uses the 3' end of this newly synthesized short ssDNA to perform the RNA-dependent minus-strand DNA synthesis of the whole template. RNase H digests the RNA template except for two polypurine tracts (PPTs) situated at the 5'-end and near the center of the genome. It is not clear if both polymerase and RNase H activities are simultaneous. RNase H probably can proceed both in a polymerase-dependent (RNA cut into small fragments by the same RT performing DNA synthesis) and a polymerase-independent mode (cleavage of remaining RNA fragments by free RTs). Secondly, RT performs DNA-directed plus-strand DNA synthesis using the PPTs that have not been removed by RNase H as primers. PPTs and tRNA primers are then removed by RNase H. The 3' and 5' ssDNA PBS regions hybridize to form a circular dsDNA intermediate. Strand displacement synthesis by RT to the PBS and PPT ends produces a blunt ended, linear dsDNA copy of the viral genome that includes long terminal repeats (LTRs) at both ends. Functionally, catalyzes viral DNA integration into the host chromosome, by performing a series of DNA cutting and joining reactions. This enzyme activity takes place after virion entry into a cell and reverse transcription of the RNA genome in dsDNA. The first step in the integration process is 3' processing. This step requires a complex comprising the viral genome, matrix protein, Vpr and integrase. This complex is called the pre-integration complex (PIC). The integrase protein removes 2 nucleotides from each 3' end of the viral DNA, leaving recessed CA OH's at the 3' ends. In the second step, the PIC enters cell nucleus. This process is mediated through integrase and Vpr proteins, and allows the virus to infect a non dividing cell. This ability to enter the nucleus is specific of lentiviruses, other retroviruses cannot and rely on cell division to access cell chromosomes. In the third step, termed strand transfer, the integrase protein joins the previously processed 3' ends to the 5' ends of strands of target cellular DNA at the site of integration. The 5'-ends are produced by integrase-catalyzed staggered cuts, 5 bp apart. A Y-shaped, gapped, recombination intermediate results, with the 5'-ends of the viral DNA strands and the 3' ends of target DNA strands remaining unjoined, flanking a gap of 5 bp. The last step is viral DNA integration into host chromosome. This involves host DNA repair synthesis in which the 5 bp gaps between the unjoined strands are filled in and then ligated. Since this process occurs at both cuts flanking the HIV genome, a 5 bp duplication of host DNA is produced at the ends of HIV-1 integration. Alternatively, Integrase may catalyze the excision of viral DNA just after strand transfer, this is termed disintegration. The chain is Gag-Pol polyprotein (gag-pol) from Human immunodeficiency virus type 1 group M subtype B (isolate HXB2) (HIV-1).